We begin with the raw amino-acid sequence, 261 residues long: MNGLQEVCSSSGSVMIGLPAEEDENAAHSSEDSSCPDESVSETELDLALGLSIGRRKVRSSLSSSSSSLTRESGTKRSADSSPAAASNATRQVAVGWPPLRTYRINSLVNQAKSLATEGGLSSGIQKETTKSVVVAAKNDDACFIKSSRTSMLVKVTMDGVIIGRKVDLNALDSYAALEKTLDLMFFQIPSPVTRSNTQGYKTIKETCTSKLLDGSSEYIITYQDKDGDWMLVGDVPWQMFLGSVTRLRIMKTSIGAGVGK.

Residues 1 to 43 form a disordered region; that stretch reads MNGLQEVCSSSGSVMIGLPAEEDENAAHSSEDSSCPDESVSET. The short motif at 45–49 is the EAR-like (transcriptional repression) element; sequence LDLAL. The interval 62–90 is disordered; sequence LSSSSSSLTRESGTKRSADSSPAAASNAT. Over residues 80-89 the composition is skewed to low complexity; sequence DSSPAAASNA. Positions 151-253 constitute a PB1 domain; that stretch reads SMLVKVTMDG…SVTRLRIMKT (103 aa).

It belongs to the Aux/IAA family. Homodimers and heterodimers. As to expression, preferentially expressed in vegetative organs.

Its subcellular location is the nucleus. In terms of biological role, aux/IAA proteins are short-lived transcriptional factors that function as repressors of early auxin response genes at low auxin concentrations. Repression is thought to result from the interaction with auxin response factors (ARFs), proteins that bind to the auxin-responsive promoter element (AuxRE). Formation of heterodimers with ARF proteins may alter their ability to modulate early auxin response genes expression. The polypeptide is Auxin-responsive protein IAA10 (IAA10) (Arabidopsis thaliana (Mouse-ear cress)).